We begin with the raw amino-acid sequence, 278 residues long: tRNA pseudouridine synthase A (278 aa).

Catalysis depends on Asp52, which acts as the Nucleophile. Tyr111 contacts substrate. Residues 253 to 264 are compositionally biased toward low complexity; sequence AKAGPLEAAPLG. The disordered stretch occupies residues 253–278; that stretch reads AKAGPLEAAPLGEAPLKEATLKEDWR. Positions 267-278 are enriched in basic and acidic residues; it reads PLKEATLKEDWR.

Belongs to the tRNA pseudouridine synthase TruA family. In terms of assembly, homodimer.

It catalyses the reaction uridine(38/39/40) in tRNA = pseudouridine(38/39/40) in tRNA. Functionally, formation of pseudouridine at positions 38, 39 and 40 in the anticodon stem and loop of transfer RNAs. This Rhodospirillum rubrum (strain ATCC 11170 / ATH 1.1.1 / DSM 467 / LMG 4362 / NCIMB 8255 / S1) protein is tRNA pseudouridine synthase A.